The following is a 181-amino-acid chain: S-fimbrial protein subunit SfaA (181 aa).

Positions 1 to 24 (MKLKFISMAVFSALTLGVATNASA) are cleaved as a signal peptide. Residues cysteine 44 and cysteine 84 are joined by a disulfide bond.

Belongs to the fimbrial protein family.

Its subcellular location is the fimbrium. Functionally, fimbriae (also called pili), polar filaments radiating from the surface of the bacterium to a length of 0.5-1.5 micrometers and numbering 100-300 per cell, enable bacteria to colonize the epithelium of specific host organs. Its function is as follows. The major fimbrial subunit. Interacts with alpha-sialic acid-(2-3)-beta-Gal containing receptors. It belongs to the group of Mrh (Mannose-resistant hemagglutination) fimbrial proteins. The chain is S-fimbrial protein subunit SfaA (sfaA) from Escherichia coli O6:K15:H31 (strain 536 / UPEC).